The following is a 494-amino-acid chain: Lysine--tRNA ligase (494 aa).

Residues E405 and E412 each coordinate Mg(2+).

Belongs to the class-II aminoacyl-tRNA synthetase family. As to quaternary structure, homodimer. The cofactor is Mg(2+).

It localises to the cytoplasm. It catalyses the reaction tRNA(Lys) + L-lysine + ATP = L-lysyl-tRNA(Lys) + AMP + diphosphate. This Geobacillus stearothermophilus (Bacillus stearothermophilus) protein is Lysine--tRNA ligase (lysS).